A 418-amino-acid chain; its full sequence is Magnesium-chelatase subunit ChlI-2, chloroplastic (418 aa).

The transit peptide at 1–55 directs the protein to the chloroplast; the sequence is MASLLGRSPSSILTCPRISSPSSTSSMSHLCFGPEKLSGRIQFNPKKNRSRYHVS. Val-56 bears the N-acetylvaline mark. Cystine bridges form between Cys-96–Cys-187 and Cys-348–Cys-390. Residue 113-120 coordinates ATP; the sequence is GDRGTGKS.

It belongs to the Mg-chelatase subunits D/I family. As to quaternary structure, the magnesium chelatase complex is a heterotrimer consisting of subunits CHLI, CHLD and CHLH. As to expression, expressed in leaves.

It is found in the plastid. Its subcellular location is the chloroplast. The catalysed reaction is protoporphyrin IX + Mg(2+) + ATP + H2O = Mg-protoporphyrin IX + ADP + phosphate + 3 H(+). It functions in the pathway porphyrin-containing compound metabolism; chlorophyll biosynthesis. Redox regulation; active in reducing conditions, inactive in oxidizing conditions. Thioredoxins f and m mediate the reversible reductive activation of oxidized CHLI2. Its function is as follows. Involved in chlorophyll biosynthesis. Catalyzes the insertion of magnesium ion into protoporphyrin IX to yield Mg-protoporphyrin IX. The reaction takes place in two steps, with an ATP-dependent activation followed by an ATP-dependent chelation step. Possesses low affinity for ATP and may play a limited role in chlorophyll biosynthesis, and contributes to the assembly of the Mg-chelatase complex. This Arabidopsis thaliana (Mouse-ear cress) protein is Magnesium-chelatase subunit ChlI-2, chloroplastic (CHLI2).